The following is an 867-amino-acid chain: Ataxin-7 (867 aa).

A compositionally biased stretch (basic and acidic residues) spans 1–15 (MSERAADDVRGEPRR). The segment at 1 to 59 (MSERAADDVRGEPRRAAGGAAAARQQQQQPQPLQPQRQHPPLRRPRAEDGGTGDTTTSA) is disordered. Residues 16-39 (AAGGAAAARQQQQQPQPLQPQRQH) show a composition bias toward low complexity. The residue at position 222 (K222) is an N6-acetyllysine. Residue K243 forms a Glycyl lysine isopeptide (Lys-Gly) (interchain with G-Cter in SUMO); alternate linkage. A Glycyl lysine isopeptide (Lys-Gly) (interchain with G-Cter in SUMO2); alternate cross-link involves residue K243. The region spanning 320–387 (KRLSEREFDP…KAREKELIRH (68 aa)) is the SCA7 domain. Residues 379–400 (AREKELIRHDSQQVPHPLRDPH) show a composition bias toward basic and acidic residues. Disordered stretches follow at residues 379-483 (AREK…EESV), 600-711 (HGTT…SHSV), and 845-867 (TGNISGAQGLTNNSLLHQPKARP). Composition is skewed to pro residues over residues 426 to 437 (PQTPSLPRPPGC) and 447 to 462 (IDPPPGQESPHPPLPA). Residues 472–481 (EEGEGDDREE) are compositionally biased toward acidic residues. Residues 619-647 (SVQSRQVSASSSPPSTPSGLSSVPSSPLS) are compositionally biased toward low complexity. Over residues 649 to 659 (KPQKWKPSKSI) the composition is skewed to basic residues. Residues 665 to 674 (SALSTNCHNA) are compositionally biased toward polar residues. Over residues 689–711 (SSPLLVPSSSSSSSSSSSSSHSV) the composition is skewed to low complexity. Over residues 846–860 (GNISGAQGLTNNSLL) the composition is skewed to polar residues.

This sequence belongs to the ataxin-7 family. In terms of assembly, component of the SAGA transcription coactivator-HAT complex, at least composed of SUPT3H, GCN5L2, TAF5L, TAF6L, SUPT7L, TADA3L, TAD1L, TAF10, TAF12, TRRAP, TAF9 and ATXN7. The STAGA core complex is associated with a subcomplex required for histone deubiquitination composed of ATXN7L3, ENY2 and USP22. Interacts with SORBS1, PSMC1 and CRX. Interacts with TRRAP, GCN5L2 and TAF10. Interacts with alpha tubulin. Post-translationally, proteolytically cleaved by caspase-7 (CASP7). Sumoylation has no effect on subcellular location or interaction with components of the STAGA complex. As to expression, widely expressed in adult tissues, with the highest expression in heart, brain, liver and kidney.

The protein resides in the nucleus. It localises to the nucleolus. It is found in the nucleus matrix. Its subcellular location is the cytoplasm. The protein localises to the cytoskeleton. Functionally, acts as a component of the SAGA (aka STAGA) transcription coactivator-HAT complex. Mediates the interaction of SAGA complex with the CRX and is involved in CRX-dependent gene activation. Probably involved in tethering the deubiquitination module within the SAGA complex. Necessary for microtubule cytoskeleton stabilization. Involved in neurodegeneration. The sequence is that of Ataxin-7 (Atxn7) from Mus musculus (Mouse).